Consider the following 300-residue polypeptide: Formamidopyrimidine-DNA glycosylase (300 aa).

The active-site Schiff-base intermediate with DNA is the proline 2. Glutamate 3 (proton donor) is an active-site residue. Residue lysine 60 is the Proton donor; for beta-elimination activity of the active site. Positions 108, 136, and 181 each coordinate DNA. An FPG-type zinc finger spans residues 266–300 (WVYSRAGQPCRICNTPLEKIKLAGRSTHFCPQCQK). The Proton donor; for delta-elimination activity role is filled by arginine 290.

This sequence belongs to the FPG family. As to quaternary structure, monomer. Zn(2+) serves as cofactor.

The catalysed reaction is Hydrolysis of DNA containing ring-opened 7-methylguanine residues, releasing 2,6-diamino-4-hydroxy-5-(N-methyl)formamidopyrimidine.. It carries out the reaction 2'-deoxyribonucleotide-(2'-deoxyribose 5'-phosphate)-2'-deoxyribonucleotide-DNA = a 3'-end 2'-deoxyribonucleotide-(2,3-dehydro-2,3-deoxyribose 5'-phosphate)-DNA + a 5'-end 5'-phospho-2'-deoxyribonucleoside-DNA + H(+). Its function is as follows. Involved in base excision repair of DNA damaged by oxidation or by mutagenic agents. Acts as a DNA glycosylase that recognizes and removes damaged bases. Has a preference for oxidized purines, such as 7,8-dihydro-8-oxoguanine (8-oxoG). Has AP (apurinic/apyrimidinic) lyase activity and introduces nicks in the DNA strand. Cleaves the DNA backbone by beta-delta elimination to generate a single-strand break at the site of the removed base with both 3'- and 5'-phosphates. The sequence is that of Formamidopyrimidine-DNA glycosylase from Trichodesmium erythraeum (strain IMS101).